The following is a 311-amino-acid chain: Malate dehydrogenase (311 aa).

NAD(+) contacts are provided by residues 7 to 13 (GAAGGIG) and D34. Positions 81 and 87 each coordinate substrate. Residues N94 and 117–119 (ITN) contribute to the NAD(+) site. Residues N119 and R153 each contribute to the substrate site. The Proton acceptor role is filled by H177. Position 227 (M227) interacts with NAD(+).

The protein belongs to the LDH/MDH superfamily. MDH type 1 family. Homodimer.

The enzyme catalyses (S)-malate + NAD(+) = oxaloacetate + NADH + H(+). Its function is as follows. Catalyzes the reversible oxidation of malate to oxaloacetate. The polypeptide is Malate dehydrogenase (Shewanella woodyi (strain ATCC 51908 / MS32)).